The sequence spans 161 residues: MAIAVYPGTFDPMTRGHEDLVRRASNIFDELVVGVAHSPNKRPFFSLEERISIAREVLGHYPNVRVEGFAGLLKDFVRKNNARVIVRGLRAVSDFEYEFQMAGMNRYLLPDVETMFLTPSDQYQFISGTFVREIAVLGGDVSKFVFPSVERWLAEKISKPE.

Threonine 9 contacts substrate. ATP is bound by residues 9-10 (TF) and histidine 17. Residues lysine 41, leucine 73, and arginine 87 each coordinate substrate. ATP-binding positions include 88–90 (GLR), glutamate 98, and 123–129 (YQFISGT).

This sequence belongs to the bacterial CoaD family. In terms of assembly, homohexamer. Mg(2+) is required as a cofactor.

It localises to the cytoplasm. It carries out the reaction (R)-4'-phosphopantetheine + ATP + H(+) = 3'-dephospho-CoA + diphosphate. It functions in the pathway cofactor biosynthesis; coenzyme A biosynthesis; CoA from (R)-pantothenate: step 4/5. Functionally, reversibly transfers an adenylyl group from ATP to 4'-phosphopantetheine, yielding dephospho-CoA (dPCoA) and pyrophosphate. The chain is Phosphopantetheine adenylyltransferase from Cupriavidus pinatubonensis (strain JMP 134 / LMG 1197) (Cupriavidus necator (strain JMP 134)).